The following is a 1165-amino-acid chain: MEPITFTARKHPFPNEVSVDFGLQLVGSLPVHSLTTMPMLPWVVAEVRRLSGQSSKKEPGTKPVRLCVSPSGLRCEPEPGKSQQWDPLICSSIFECKPQRVHKLIHNSHDPSYFACLIKNDAANQQSICYVFKADDQTKVPEIISSIRQAGKIARQEELRCPSEFDDTFAKKFEVLFCGRVAVAHRKAPPALIDECIEGFSHVSGGFSSDQSRSALQPPGDGERGPRPMRKSFSQPGLRSLAFRKEFQDAGLRSSSFFSSFEESDIENHLISGHNIVQPTDIEENRTMLFTIGQSEVYLISPDTKKIALQKNFKEISFCSQGIRHVDHFGFICRESSGGGGFHFVCYVFQCTNEALVDEIMMTLKQAFTVAAVQQTAKAPAQLCEGCPLQGLHKLCERIEGMNSSKTKLELQKHLTTLTNQEQATIFEEVQKLRPRNEQRENELIISFLRCLYEEKQKVHIHIGEIKQTSQIAAENIGSELPSSATRFRLDMLKNKAKRSLTESLESILSRGNKARGLQEHSASLDLDSSVSSMFSNTSKEPSGYEKEALPISESCFRLLGSSDDLSSDSESQLTEEPALLSPKQGFRRRANTLSHVPVECQEPPQLVRGSPGVSQRKLVRYHSVSTETPHERKDFESKADHISDASRTPVKTRRHSWRQQIFLRVATPQKACESPKRYEDYSELGELPPRSPLEPVCEDGPFGPVPEEKKRTSHELRELWQKAILQQILLLRMEKENQKLQASENDLLNKRLKLDYEEITPCLKEVTTVWEKILSTPGRSKIKFDMEKMHSAVGQGVPRHHRGEIWKFLAEQYHLKHPFPCKQQPKDTPYKELLKQLTSQQHAILIDLGRTFPTHPYYSAQLGAGQLSLYNILKAYSLLDQEVGYCQGLSFVAGILLLHMGEEEAFNMLKFLMFDMGLRKQYRPDMIILQIQMYQLSRLLHDYHRDLYNHLEEHEIGPSLYAAPWFLTVFASQFPLGFVARVFDMIFLQGSEVIFKVALSLLGSHKPLILQHENLETIVDFIKSTLPNLGLVQMEKTISQVFETDISKQLQAYEVEYHVLQEELIDSSPLSDNQRMDKLEKTNSSLRKQNLDLLEQLQVANGRIQSLEATVEKLLTSESKLKQATLALELERSALLQTVEQLRRQTAELGSQESDPTLPKPSGD.

S146 carries the post-translational modification Phosphoserine. Residues 207–234 form a disordered region; that stretch reads FSSDQSRSALQPPGDGERGPRPMRKSFS. A Phosphoserine; by PKB/AKT1 modification is found at S232. S234 carries the phosphoserine; by AMPK modification. The PID domain maps to 243–401; the sequence is FRKEFQDAGL…LHKLCERIEG (159 aa). The residue at position 500 (S500) is a Phosphoserine. T502 is modified (phosphothreonine; by PKB/AKT1). Phosphoserine is present on residues S504, S522, S524, S562, S563, S567, S568, and S582. Position 593 is a phosphothreonine (T593). S611 carries the phosphoserine modification. The residue at position 624 (S624) is a Phosphoserine; by PKB/AKT1. Positions 624 to 651 are disordered; sequence SVSTETPHERKDFESKADHISDASRTPV. Residues 629-645 show a composition bias toward basic and acidic residues; the sequence is TPHERKDFESKADHISD. A phosphoserine mark is found at S692 and S938. Residues 797–991 form the Rab-GAP TBC domain; that stretch reads GVPRHHRGEI…RVFDMIFLQG (195 aa). At Y949 the chain carries Phosphotyrosine. The segment at 1146-1165 is disordered; that stretch reads QTAELGSQESDPTLPKPSGD.

As to quaternary structure, interacts with APPL2 (via BAR domain); interaction is dependent of TBC1D1 phosphorylation at Ser-232; interaction diminishes the phosphorylation of TBC1D1 at Thr-593, resulting in inhibition of SLC2A4/GLUT4 translocation and glucose uptake. Insulin-stimulated phosphorylation by AKT family kinases stimulates SLC2A4/GLUT4 translocation.

The protein localises to the nucleus. Functionally, may act as a GTPase-activating protein for Rab family protein(s). May play a role in the cell cycle and differentiation of various tissues. Involved in the trafficking and translocation of GLUT4-containing vesicles and insulin-stimulated glucose uptake into cells. The chain is TBC1 domain family member 1 (TBC1D1) from Bos taurus (Bovine).